The following is a 370-amino-acid chain: Small ribosomal subunit biogenesis GTPase RsgA (370 aa).

The region spanning 111 to 270 (RSEGQILAAN…LIDTPGLRGV (160 aa)) is the CP-type G domain. Residues 158-161 (TKAD) and 212-220 (GQSGAGKST) contribute to the GTP site. Zn(2+) contacts are provided by Cys-293, Cys-298, His-300, and Cys-306.

The protein belongs to the TRAFAC class YlqF/YawG GTPase family. RsgA subfamily. Monomer. Associates with 30S ribosomal subunit, binds 16S rRNA. Zn(2+) is required as a cofactor.

The protein resides in the cytoplasm. One of several proteins that assist in the late maturation steps of the functional core of the 30S ribosomal subunit. Helps release RbfA from mature subunits. May play a role in the assembly of ribosomal proteins into the subunit. Circularly permuted GTPase that catalyzes slow GTP hydrolysis, GTPase activity is stimulated by the 30S ribosomal subunit. This Streptomyces avermitilis (strain ATCC 31267 / DSM 46492 / JCM 5070 / NBRC 14893 / NCIMB 12804 / NRRL 8165 / MA-4680) protein is Small ribosomal subunit biogenesis GTPase RsgA.